Reading from the N-terminus, the 518-residue chain is Bifunctional purine biosynthesis protein PurH (518 aa).

Residues 1–144 form the MGS-like domain; the sequence is MSKRALISVS…KNHAAVTVVC (144 aa).

It belongs to the PurH family.

It carries out the reaction (6R)-10-formyltetrahydrofolate + 5-amino-1-(5-phospho-beta-D-ribosyl)imidazole-4-carboxamide = 5-formamido-1-(5-phospho-D-ribosyl)imidazole-4-carboxamide + (6S)-5,6,7,8-tetrahydrofolate. It catalyses the reaction IMP + H2O = 5-formamido-1-(5-phospho-D-ribosyl)imidazole-4-carboxamide. Its pathway is purine metabolism; IMP biosynthesis via de novo pathway; 5-formamido-1-(5-phospho-D-ribosyl)imidazole-4-carboxamide from 5-amino-1-(5-phospho-D-ribosyl)imidazole-4-carboxamide (10-formyl THF route): step 1/1. It participates in purine metabolism; IMP biosynthesis via de novo pathway; IMP from 5-formamido-1-(5-phospho-D-ribosyl)imidazole-4-carboxamide: step 1/1. This chain is Bifunctional purine biosynthesis protein PurH, found in Lactococcus lactis subsp. cremoris (strain MG1363).